A 223-amino-acid chain; its full sequence is UPF0441 protein KPK_0672 (223 aa).

Positions 165 to 223 (SYGAAQPGRTMNVPKTAMAPKPATTTTVTRGGFGESVAKQSTMQRSAAGSTSSSRSMGG) are disordered. Low complexity-rich tracts occupy residues 177-193 (VPKT…TTVT) and 209-223 (RSAA…SMGG).

This sequence belongs to the UPF0441 family.

The chain is UPF0441 protein KPK_0672 from Klebsiella pneumoniae (strain 342).